We begin with the raw amino-acid sequence, 37 residues long: Mating pheromone Er-20 (37 aa).

3 disulfides stabilise this stretch: C3/C18, C10/C32, and C15/C24.

As to quaternary structure, homodimer.

The protein localises to the secreted. Mating ciliate pheromones (or gamones) are diffusible extracellular communication signals that distinguish different intraspecific classes of cells commonly referred to as 'mating types'. They prepare the latter for conjugation by changing their cell surface properties. This chain is Mating pheromone Er-20 (MAT20), found in Euplotes raikovi.